The primary structure comprises 276 residues: NADPH-dependent 7-cyano-7-deazaguanine reductase (276 aa).

Position 83 to 85 (83 to 85) interacts with substrate; sequence IES. 85–86 is a binding site for NADPH; the sequence is SK. Catalysis depends on C184, which acts as the Thioimide intermediate. The active-site Proton donor is the D191. A substrate-binding site is contributed by 223-224; it reads HE. NADPH is bound at residue 252–253; sequence RG.

Belongs to the GTP cyclohydrolase I family. QueF type 2 subfamily. In terms of assembly, homodimer.

It is found in the cytoplasm. It carries out the reaction 7-aminomethyl-7-carbaguanine + 2 NADP(+) = 7-cyano-7-deazaguanine + 2 NADPH + 3 H(+). It participates in tRNA modification; tRNA-queuosine biosynthesis. Its function is as follows. Catalyzes the NADPH-dependent reduction of 7-cyano-7-deazaguanine (preQ0) to 7-aminomethyl-7-deazaguanine (preQ1). The sequence is that of NADPH-dependent 7-cyano-7-deazaguanine reductase from Pseudomonas syringae pv. tomato (strain ATCC BAA-871 / DC3000).